The chain runs to 134 residues: Small ribosomal subunit protein uS11 (134 aa).

The interval 115 to 134 (VTPIPTDSTRRKGGRRGRRL) is disordered. Residues 125–134 (RKGGRRGRRL) show a composition bias toward basic residues.

This sequence belongs to the universal ribosomal protein uS11 family.

This is Small ribosomal subunit protein uS11 (RPS14) from Syntrichia ruralis (Great hairy screw-moss).